The chain runs to 111 residues: Photosystem II reaction center Psb28 protein (111 aa).

This sequence belongs to the Psb28 family. As to quaternary structure, part of the photosystem II complex.

Its subcellular location is the cellular thylakoid membrane. The protein is Photosystem II reaction center Psb28 protein of Nostoc sp. (strain PCC 7120 / SAG 25.82 / UTEX 2576).